A 73-amino-acid chain; its full sequence is Large ribosomal subunit protein bL31 (73 aa).

The protein belongs to the bacterial ribosomal protein bL31 family. Type A subfamily. In terms of assembly, part of the 50S ribosomal subunit.

Functionally, binds the 23S rRNA. This chain is Large ribosomal subunit protein bL31 (rpmE), found in Roseobacter denitrificans (strain ATCC 33942 / OCh 114) (Erythrobacter sp. (strain OCh 114)).